The following is a 41-amino-acid chain: Photosystem II reaction center protein L (41 aa).

Residues 20–40 (SLYLGLLLVFVVGLLFSSYFL) traverse the membrane as a helical segment.

Belongs to the PsbL family. PSII is composed of 1 copy each of membrane proteins PsbA, PsbB, PsbC, PsbD, PsbE, PsbF, PsbH, PsbI, PsbJ, PsbK, PsbL, PsbM, PsbT, PsbX, PsbY, PsbZ, Psb30/Ycf12, peripheral proteins PsbO, CyanoQ (PsbQ), PsbU, PsbV and a large number of cofactors. It forms dimeric complexes.

The protein resides in the cellular thylakoid membrane. Functionally, one of the components of the core complex of photosystem II (PSII). PSII is a light-driven water:plastoquinone oxidoreductase that uses light energy to abstract electrons from H(2)O, generating O(2) and a proton gradient subsequently used for ATP formation. It consists of a core antenna complex that captures photons, and an electron transfer chain that converts photonic excitation into a charge separation. This subunit is found at the monomer-monomer interface and is required for correct PSII assembly and/or dimerization. This Synechococcus sp. (strain JA-2-3B'a(2-13)) (Cyanobacteria bacterium Yellowstone B-Prime) protein is Photosystem II reaction center protein L.